Here is a 175-residue protein sequence, read N- to C-terminus: Crossover junction endodeoxyribonuclease RuvC (175 aa).

Residues Asp16, Glu76, and Asp148 contribute to the active site. Mg(2+) is bound by residues Asp16, Glu76, and Asp148.

This sequence belongs to the RuvC family. As to quaternary structure, homodimer which binds Holliday junction (HJ) DNA. The HJ becomes 2-fold symmetrical on binding to RuvC with unstacked arms; it has a different conformation from HJ DNA in complex with RuvA. In the full resolvosome a probable DNA-RuvA(4)-RuvB(12)-RuvC(2) complex forms which resolves the HJ. It depends on Mg(2+) as a cofactor.

It localises to the cytoplasm. The enzyme catalyses Endonucleolytic cleavage at a junction such as a reciprocal single-stranded crossover between two homologous DNA duplexes (Holliday junction).. The RuvA-RuvB-RuvC complex processes Holliday junction (HJ) DNA during genetic recombination and DNA repair. Endonuclease that resolves HJ intermediates. Cleaves cruciform DNA by making single-stranded nicks across the HJ at symmetrical positions within the homologous arms, yielding a 5'-phosphate and a 3'-hydroxyl group; requires a central core of homology in the junction. The consensus cleavage sequence is 5'-(A/T)TT(C/G)-3'. Cleavage occurs on the 3'-side of the TT dinucleotide at the point of strand exchange. HJ branch migration catalyzed by RuvA-RuvB allows RuvC to scan DNA until it finds its consensus sequence, where it cleaves and resolves the cruciform DNA. In Rhodopseudomonas palustris (strain BisB18), this protein is Crossover junction endodeoxyribonuclease RuvC.